A 455-amino-acid chain; its full sequence is CDP-diacylglycerol--serine O-phosphatidyltransferase (455 aa).

PLD phosphodiesterase domains lie at 134–160 (VFGV…NNVY) and 356–383 (GDNT…NPRA).

It belongs to the CDP-alcohol phosphatidyltransferase class-II family. Multimeric.

It is found in the cytoplasm. Its subcellular location is the cell inner membrane. The catalysed reaction is a CDP-1,2-diacyl-sn-glycerol + L-serine = a 1,2-diacyl-sn-glycero-3-phospho-L-serine + CMP + H(+). In Haemophilus influenzae (strain ATCC 51907 / DSM 11121 / KW20 / Rd), this protein is CDP-diacylglycerol--serine O-phosphatidyltransferase (pssA).